The sequence spans 183 residues: Adenine phosphoribosyltransferase (183 aa).

Belongs to the purine/pyrimidine phosphoribosyltransferase family. Homodimer.

It is found in the cytoplasm. It catalyses the reaction AMP + diphosphate = 5-phospho-alpha-D-ribose 1-diphosphate + adenine. It participates in purine metabolism; AMP biosynthesis via salvage pathway; AMP from adenine: step 1/1. In terms of biological role, catalyzes a salvage reaction resulting in the formation of AMP, that is energically less costly than de novo synthesis. This Klebsiella pneumoniae subsp. pneumoniae (strain ATCC 700721 / MGH 78578) protein is Adenine phosphoribosyltransferase.